Consider the following 241-residue polypeptide: Acetoacetyl-CoA reductase (241 aa).

Residues 12–14 and 82–86 contribute to the NADP(+) site; these read RGI and NAGIT. Residues Asp88 and 141-144 contribute to the substrate site; that span reads QMGQ. The active-site Proton acceptor is Tyr147. Residue 177 to 180 coordinates NADP(+); the sequence is PGYI. Residue 178-179 participates in substrate binding; the sequence is GY.

This sequence belongs to the short-chain dehydrogenases/reductases (SDR) family.

It localises to the cytoplasm. It carries out the reaction a (3R)-3-hydroxyacyl-CoA + NADP(+) = a 3-oxoacyl-CoA + NADPH + H(+). It functions in the pathway biopolymer metabolism; poly-(R)-3-hydroxybutanoate biosynthesis. The chain is Acetoacetyl-CoA reductase from Shinella zoogloeoides (Crabtreella saccharophila).